Here is an 810-residue protein sequence, read N- to C-terminus: MTTFCRVLLIFGIYVAVCCAQSVEDDVFHFTNPSQGNAVWILDESSLPWTGGYQFLRSISGMPTTLLSVVDSSTGVTLGQCVAPQDATGNFSKRWERFSWELTASGLDCTFEHGAAIRVEFDRTQNPRTFSIRIQSITGPACLRDVVVQTEQATGCPPHLSRNSFTANALNCSCPFLDAANEDSEIENEDVDMLANTPQFPLFKGIDPSVLGSANPPTLPPSPCANHECHNNGTCLVSQEGAATCLCRNGFTGDRCELDVCSSVPCQNGGVCRSNNGIAYCECPPAFTGLLCESAHTDESVAPICRPECSNGQCVFKDGQAQCECRQGFTGANCNVLDVCLGDAACSMFGPLAKCVLDDNMDKMSSLTLINGTYDCLCPHPIHGQFVDCMQLHAPSATSVQPTEQVVINNVTPSFPVLEISKLPTGAPVTFTATSTTLMVTQPTVTVSPTHQVPSEPFVGFTVTRAPLRPLDIGSTTLPPPFNQHIITAGEPTWSSQQPHQPSEVPTQTTFIFPQTPETTTFAPTTGTQQPVHKFVSPSVPDENEEEEEEETTEETEETFPTPSTMQVATNGQFTTETAFVTSTIPSTTTDMEETDEDEDMTEEVTDSSTQPSTTVFVQPTTTFTTEAPTTTMEEEEEMTTDQVEDIESEEIATTTTQTSLPFWMTTTNKQVVPDSPTPMVIMPHPQPDEKMETSTEGVVDEESDEERTTVPESNEEVVTKNAEATTPSDITHHHTSSGKQSSAAASWIIAIIALIVLGLLLLATSLFILRYIRQSRKLHGKYNPAREEHNLSAAYAMPMSHIAKEERLI.

The first 20 residues, 1-20 (MTTFCRVLLIFGIYVAVCCA), serve as a signal peptide directing secretion. Over 21 to 748 (QSVEDDVFHF…GKQSSAAASW (728 aa)) the chain is Extracellular. N-linked (GlcNAc...) asparagine glycosylation is found at N90, N171, and N232. 3 consecutive EGF-like domains span residues 220-257 (PPSP…DRCE), 258-293 (LDVC…LLCE), and 301-335 (VAPI…ANCN). Cystine bridges form between C224–C235, C229–C245, C247–C256, C261–C272, C266–C281, C283–C292, C305–C314, C309–C323, and C325–C334. The N-linked (GlcNAc...) asparagine glycan is linked to N371. Residues 522 to 531 (FAPTTGTQQP) are compositionally biased toward low complexity. Disordered regions lie at residues 522 to 567 (FAPT…STMQ) and 684 to 738 (PHPQ…HTSS). Positions 542 to 558 (DENEEEEEEETTEETEE) are enriched in acidic residues. A helical transmembrane segment spans residues 749-769 (IIAIIALIVLGLLLLATSLFI). At 770 to 810 (LRYIRQSRKLHGKYNPAREEHNLSAAYAMPMSHIAKEERLI) the chain is on the cytoplasmic side.

As to expression, highly expressed in the pharynx, circumpharyngeal cells, pharyngeal-intestinal valve and a subset of neurons in larval and embryonic stages. Also moderately expressed in the lining of the intestine, coelomocytes, labial process bundles and some hypodermal cells. In adults, it is predominantly expressed in the pharynx, the pharyngeal-intenstinal valve, some circumpharyngeal cells, m3, m4 and m6 pharyngeal muscles, and IL1, OLQ, BAG and ALN neurons. Weaker expression is observed in labial process bundles, coelomocytes, the ventral hypodermal ridge, the vulval hypodermis and the sensory rays of the adult male tail.

The protein resides in the membrane. Regulates pharyngeal pumping during feeding. The sequence is that of Abnormal pharyngeal pumping eat-20 (eat-20) from Caenorhabditis elegans.